Consider the following 282-residue polypeptide: Protein-export membrane protein SecF (282 aa).

6 helical membrane-spanning segments follow: residues 9–29, 120–140, 149–169, 174–194, 214–234, and 236–256; these read IAIPIALLILSILLIGFKGIP, EGFKAVGFAFMFMAIVVYLYF, IILSALSDIIMALGAMSLLGI, ATIAALLMVIGYSVDSDILLT, KTGLTMTLTTITAMLILLIVV, and LFIPVADILANIATVLILALI.

The protein belongs to the SecD/SecF family. SecF subfamily. In terms of assembly, part of the protein translocation apparatus. Forms a complex with SecD.

The protein localises to the cell membrane. Involved in protein export. This is Protein-export membrane protein SecF from Methanocaldococcus jannaschii (strain ATCC 43067 / DSM 2661 / JAL-1 / JCM 10045 / NBRC 100440) (Methanococcus jannaschii).